The primary structure comprises 334 residues: Holliday junction branch migration complex subunit RuvB (334 aa).

Residues 1-181 (MHDRLISGTE…FGIVQRLEFY (181 aa)) are large ATPase domain (RuvB-L). ATP is bound by residues isoleucine 20, arginine 21, glycine 62, lysine 65, threonine 66, threonine 67, 128–130 (EDY), arginine 171, tyrosine 181, and arginine 218. Mg(2+) is bound at residue threonine 66. The tract at residues 182–252 (SVEDLTHIVT…MAQRALDMLN (71 aa)) is small ATPAse domain (RuvB-S). Residues 255–334 (KDGLDTLDRR…FGLTPPEPKN (80 aa)) form a head domain (RuvB-H) region. DNA contacts are provided by arginine 310 and arginine 315.

Belongs to the RuvB family. Homohexamer. Forms an RuvA(8)-RuvB(12)-Holliday junction (HJ) complex. HJ DNA is sandwiched between 2 RuvA tetramers; dsDNA enters through RuvA and exits via RuvB. An RuvB hexamer assembles on each DNA strand where it exits the tetramer. Each RuvB hexamer is contacted by two RuvA subunits (via domain III) on 2 adjacent RuvB subunits; this complex drives branch migration. In the full resolvosome a probable DNA-RuvA(4)-RuvB(12)-RuvC(2) complex forms which resolves the HJ.

It localises to the cytoplasm. It carries out the reaction ATP + H2O = ADP + phosphate + H(+). The RuvA-RuvB-RuvC complex processes Holliday junction (HJ) DNA during genetic recombination and DNA repair, while the RuvA-RuvB complex plays an important role in the rescue of blocked DNA replication forks via replication fork reversal (RFR). RuvA specifically binds to HJ cruciform DNA, conferring on it an open structure. The RuvB hexamer acts as an ATP-dependent pump, pulling dsDNA into and through the RuvAB complex. RuvB forms 2 homohexamers on either side of HJ DNA bound by 1 or 2 RuvA tetramers; 4 subunits per hexamer contact DNA at a time. Coordinated motions by a converter formed by DNA-disengaged RuvB subunits stimulates ATP hydrolysis and nucleotide exchange. Immobilization of the converter enables RuvB to convert the ATP-contained energy into a lever motion, pulling 2 nucleotides of DNA out of the RuvA tetramer per ATP hydrolyzed, thus driving DNA branch migration. The RuvB motors rotate together with the DNA substrate, which together with the progressing nucleotide cycle form the mechanistic basis for DNA recombination by continuous HJ branch migration. Branch migration allows RuvC to scan DNA until it finds its consensus sequence, where it cleaves and resolves cruciform DNA. This Acinetobacter baylyi (strain ATCC 33305 / BD413 / ADP1) protein is Holliday junction branch migration complex subunit RuvB.